Here is a 316-residue protein sequence, read N- to C-terminus: Acetylglutamate kinase (316 aa).

Substrate contacts are provided by residues 65 to 66, Arg-87, and Asn-179; that span reads GG.

Belongs to the acetylglutamate kinase family. ArgB subfamily.

The protein localises to the cytoplasm. The catalysed reaction is N-acetyl-L-glutamate + ATP = N-acetyl-L-glutamyl 5-phosphate + ADP. Its pathway is amino-acid biosynthesis; L-arginine biosynthesis; N(2)-acetyl-L-ornithine from L-glutamate: step 2/4. Its function is as follows. Catalyzes the ATP-dependent phosphorylation of N-acetyl-L-glutamate. This Alkaliphilus metalliredigens (strain QYMF) protein is Acetylglutamate kinase.